A 502-amino-acid polypeptide reads, in one-letter code: Glutamate decarboxylase (502 aa).

K278 carries the N6-(pyridoxal phosphate)lysine modification. Residues 471-502 form a calmodulin-binding region; it reads GLHHFHMDTVETQKDIIKHWRKIAGKKTSGVC.

The protein belongs to the group II decarboxylase family. It depends on pyridoxal 5'-phosphate as a cofactor.

It catalyses the reaction L-glutamate + H(+) = 4-aminobutanoate + CO2. Functionally, catalyzes the production of GABA. The calmodulin-binding is calcium-dependent and it is proposed that this may, directly or indirectly, form a calcium regulated control of GABA biosynthesis. In Solanum lycopersicum (Tomato), this protein is Glutamate decarboxylase.